We begin with the raw amino-acid sequence, 383 residues long: GDSL esterase/lipase At1g28610 (383 aa).

Residues M1–S22 form the signal peptide. The active-site Nucleophile is S38. N134, N184, and N315 each carry an N-linked (GlcNAc...) asparagine glycan. Catalysis depends on residues D340 and H343.

It belongs to the 'GDSL' lipolytic enzyme family.

It is found in the secreted. This chain is GDSL esterase/lipase At1g28610, found in Arabidopsis thaliana (Mouse-ear cress).